The chain runs to 101 residues: Small ribosomal subunit protein uS14 (101 aa).

This sequence belongs to the universal ribosomal protein uS14 family. Part of the 30S ribosomal subunit. Contacts proteins S3 and S10.

In terms of biological role, binds 16S rRNA, required for the assembly of 30S particles and may also be responsible for determining the conformation of the 16S rRNA at the A site. In Pseudoalteromonas atlantica (strain T6c / ATCC BAA-1087), this protein is Small ribosomal subunit protein uS14.